Reading from the N-terminus, the 487-residue chain is NADH-quinone oxidoreductase subunit N (487 aa).

The next 14 membrane-spanning stretches (helical) occupy residues 8–28 (LIAMLPLLIVGLTVVVVMLSI), 35–55 (FINATLTVIGLNLALLSLYFV), 78–98 (GLVIIASLATSTFAYPWLVGY), 104–124 (EFYLLVLIAALGGILLTSANH), 125–145 (LASLFLGIELLTLPLFGLIGY), 159–179 (YMLLSAAASSFLLFGMALLYA), 203–223 (ILAGLGMMIVGLGFKLSLVPF), 235–255 (PAPVSTFLATASKIAIFAVVM), 271–291 (LVLSIIAVASILFGNLMAISQ), 297–317 (LLGYSSIAHLGYLLIALVAVQ), 328–348 (IGVYLAGYLFSSLGAFGVVSL), 376–396 (AVMTVMMLSLAGIPMTLGFIG), 409–428 (LWWLTGAVVLGSAIGLYYYL), and 451–471 (ALTAGGVVVLISAILVLVLGI).

It belongs to the complex I subunit 2 family. NDH-1 is composed of 13 different subunits. Subunits NuoA, H, J, K, L, M, N constitute the membrane sector of the complex.

It localises to the cell inner membrane. The enzyme catalyses a quinone + NADH + 5 H(+)(in) = a quinol + NAD(+) + 4 H(+)(out). NDH-1 shuttles electrons from NADH, via FMN and iron-sulfur (Fe-S) centers, to quinones in the respiratory chain. The immediate electron acceptor for the enzyme in this species is believed to be ubiquinone. Couples the redox reaction to proton translocation (for every two electrons transferred, four hydrogen ions are translocated across the cytoplasmic membrane), and thus conserves the redox energy in a proton gradient. The sequence is that of NADH-quinone oxidoreductase subunit N from Yersinia pestis bv. Antiqua (strain Angola).